The following is a 183-amino-acid chain: Akirin-1B (183 aa).

Residues 14-43 form a disordered region; it reads EALMSPQSPKRRRCAPLPGSPATPSPQRCG. An SYVS motif motif is present at residues 180–183; it reads SYVS.

This sequence belongs to the akirin family.

The protein localises to the nucleus. Its function is as follows. Molecular adapter that acts as a bridge between proteins, and which is involved skeletal muscle development. Functions as a signal transducer for MSTN during skeletal muscle regeneration and myogenesis. The sequence is that of Akirin-1B (akirin1-b) from Xenopus laevis (African clawed frog).